We begin with the raw amino-acid sequence, 165 residues long: Cyclic pyranopterin monophosphate synthase (165 aa).

Substrate contacts are provided by residues leucine 78–histidine 80 and methionine 116–glutamate 117. The active site involves aspartate 131.

It belongs to the MoaC family. In terms of assembly, homohexamer; trimer of dimers.

It carries out the reaction (8S)-3',8-cyclo-7,8-dihydroguanosine 5'-triphosphate = cyclic pyranopterin phosphate + diphosphate. It participates in cofactor biosynthesis; molybdopterin biosynthesis. In terms of biological role, catalyzes the conversion of (8S)-3',8-cyclo-7,8-dihydroguanosine 5'-triphosphate to cyclic pyranopterin monophosphate (cPMP). This Sinorhizobium fredii (strain NBRC 101917 / NGR234) protein is Cyclic pyranopterin monophosphate synthase.